The chain runs to 160 residues: CXXC motif containing zinc binding protein (160 aa).

Cys33, Cys36, Cys67, and Cys70 together coordinate Zn(2+).

The protein belongs to the UPF0587 family.

This chain is CXXC motif containing zinc binding protein (czib), found in Xenopus laevis (African clawed frog).